The primary structure comprises 539 residues: Chaperonin GroEL (539 aa).

Residues 29 to 32 (TIGP), 86 to 90 (DGTTT), G414, and D493 contribute to the ATP site.

This sequence belongs to the chaperonin (HSP60) family. As to quaternary structure, forms a cylinder of 14 subunits composed of two heptameric rings stacked back-to-back. Interacts with the co-chaperonin GroES.

The protein resides in the cytoplasm. The catalysed reaction is ATP + H2O + a folded polypeptide = ADP + phosphate + an unfolded polypeptide.. Its function is as follows. Together with its co-chaperonin GroES, plays an essential role in assisting protein folding. The GroEL-GroES system forms a nano-cage that allows encapsulation of the non-native substrate proteins and provides a physical environment optimized to promote and accelerate protein folding. This chain is Chaperonin GroEL, found in Staphylococcus aureus.